The chain runs to 194 residues: Putative manganese efflux pump MntP (194 aa).

6 consecutive transmembrane segments (helical) span residues 3-23 (PITI…AAIG), 37-57 (LYVA…GWLL), 65-85 (IATF…IHMI), 112-132 (LAAT…SLAF), 139-159 (IVAA…VMLG), and 170-190 (AEIV…YEHL).

Belongs to the MntP (TC 9.B.29) family.

It is found in the cell inner membrane. Probably functions as a manganese efflux pump. The sequence is that of Putative manganese efflux pump MntP from Xylella fastidiosa (strain 9a5c).